Here is a 346-residue protein sequence, read N- to C-terminus: Coproporphyrin III ferrochelatase (346 aa).

Residues S52 and Y121 each contribute to the Fe-coproporphyrin III site. Residues H181 and E264 each coordinate Fe(2+).

The protein belongs to the ferrochelatase family.

The protein localises to the cytoplasm. The enzyme catalyses Fe-coproporphyrin III + 2 H(+) = coproporphyrin III + Fe(2+). Its pathway is porphyrin-containing compound metabolism; protoheme biosynthesis. Functionally, involved in coproporphyrin-dependent heme b biosynthesis. Catalyzes the insertion of ferrous iron into coproporphyrin III to form Fe-coproporphyrin III. The protein is Coproporphyrin III ferrochelatase of Mycobacterium sp. (strain KMS).